A 123-amino-acid chain; its full sequence is Small ribosomal subunit protein uS12c (123 aa).

The protein belongs to the universal ribosomal protein uS12 family. In terms of assembly, part of the 30S ribosomal subunit.

Its subcellular location is the plastid. The protein localises to the chloroplast. Functionally, with S4 and S5 plays an important role in translational accuracy. Located at the interface of the 30S and 50S subunits. This Pinus thunbergii (Japanese black pine) protein is Small ribosomal subunit protein uS12c (rps12).